A 212-amino-acid chain; its full sequence is HTH-type transcriptional repressor NicS (212 aa).

An HTH tetR-type domain is found at 14–74 (DRTRDNILKA…SVLEHIYASF (61 aa)). Positions 37–56 (RIEQISTLAKSNDRMIYYYF) form a DNA-binding region, H-T-H motif.

The protein operates within cofactor degradation; nicotinate degradation [regulation]. Transcriptional repressor for the nicAB operon, encoding the upper aerobic nicotinate degradation pathway. Acts under non-induced conditions: repression of the nicAB operon becomes alleviated in presence of either nicotinate or 6-hydroxynicotinate (6HNA). This chain is HTH-type transcriptional repressor NicS (nicS), found in Pseudomonas putida (strain ATCC 47054 / DSM 6125 / CFBP 8728 / NCIMB 11950 / KT2440).